Reading from the N-terminus, the 293-residue chain is Diaminopimelate epimerase (293 aa).

Residues Asn-11 and Asn-78 each coordinate substrate. Catalysis depends on Cys-87, which acts as the Proton donor. Substrate is bound by residues 88-89, Asn-166, Asn-202, and 220-221; these read GN and ER. Cys-229 functions as the Proton acceptor in the catalytic mechanism. 230 to 231 contacts substrate; the sequence is GT.

This sequence belongs to the diaminopimelate epimerase family. In terms of assembly, homodimer.

The protein resides in the cytoplasm. It carries out the reaction (2S,6S)-2,6-diaminopimelate = meso-2,6-diaminopimelate. Its pathway is amino-acid biosynthesis; L-lysine biosynthesis via DAP pathway; DL-2,6-diaminopimelate from LL-2,6-diaminopimelate: step 1/1. Its function is as follows. Catalyzes the stereoinversion of LL-2,6-diaminopimelate (L,L-DAP) to meso-diaminopimelate (meso-DAP), a precursor of L-lysine and an essential component of the bacterial peptidoglycan. The chain is Diaminopimelate epimerase from Mycobacterium sp. (strain JLS).